The chain runs to 321 residues: MNPLTLVRETTAWVSGLSKHVKINNEALDKECEDFLNKHKIKAHKEIWADNWFHYCDIDIENKESTFTELTAKYILVLDTLNFCFWPDSEFEYHHLARGLKNALIANPKCFDADQLIKVTSETIHQWFGKDLPNTSERVRLIREVGTVLIEYFNGSIKEMILSANNKASVLVDLVTKYFWGFRDSAIYKGKQVFFYKRAQIFVGDLWGAYQGRGLGKFDDIKQLTMFADYRVPQILEELKVIEYSPELKEMIKNKVEIPVGSEMELEIRAVTVHVVEKMRDYFNKGHCELLALEIDWMLWGRGEAMLDKLPPHHRTLTIFY.

Queuine-binding residues include Phe-227, Asp-229, and Asp-296. Asp-229 functions as the Nucleophile or transition state stabilizer in the catalytic mechanism.

This sequence belongs to the QNG1 protein family.

It catalyses the reaction queuosine 5'-phosphate + H2O = queuine + D-ribose 5-phosphate. Its function is as follows. Catalyzes the hydrolysis of queuosine 5'-phosphate, releasing the nucleobase queuine (q). Is required for salvage of queuine from exogenous queuosine (Q) that is imported and then converted to queuosine 5'-phosphate intracellularly. This Dictyostelium discoideum (Social amoeba) protein is Queuosine 5'-phosphate N-glycosylase/hydrolase.